The sequence spans 312 residues: Very-long-chain 3-oxoacyl-CoA reductase (312 aa).

A helical transmembrane segment spans residues 4–24 (ALPAAGFLYWVGASTIAYLTL). 50–79 (GEWAVVTGGTDGIGKSYAEELAKRGMKIVL) contributes to the NADP(+) binding site. 2 consecutive transmembrane segments (helical) span residues 182-202 (GVILNISSASGMLPVPLLTVY) and 271-291 (GYVIHAIMGSINSILPRWIYF). Substrate is bound at residue Ser-189. Tyr-202 serves as the catalytic Proton acceptor. The Di-lysine motif signature appears at 308–312 (KTKKN).

Belongs to the short-chain dehydrogenases/reductases (SDR) family. 17-beta-HSD 3 subfamily.

Its subcellular location is the endoplasmic reticulum membrane. It catalyses the reaction a very-long-chain (3R)-3-hydroxyacyl-CoA + NADP(+) = a very-long-chain 3-oxoacyl-CoA + NADPH + H(+). The enzyme catalyses 17beta-estradiol + NAD(+) = estrone + NADH + H(+). The catalysed reaction is 17beta-estradiol + NADP(+) = estrone + NADPH + H(+). It carries out the reaction 3-oxooctadecanoyl-CoA + NADPH + H(+) = (3R)-hydroxyoctadecanoyl-CoA + NADP(+). It catalyses the reaction (7Z,10Z,13Z,16Z)-3-oxodocosatetraenoyl-CoA + NADPH + H(+) = (3R)-hydroxy-(7Z,10Z,13Z,16Z)-docosatetraenoyl-CoA + NADP(+). The enzyme catalyses 3-oxo-(7Z,10Z,13Z,16Z,19Z)-docosapentaenoyl-CoA + NADPH + H(+) = (3R)-hydroxy-(7Z,10Z,13Z,16Z,19Z)-docosapentaenoyl-CoA + NADP(+). The catalysed reaction is (8Z,11Z,14Z)-3-oxoeicosatrienoyl-CoA + NADPH + H(+) = (3R)-hydroxy-(8Z,11Z,14Z)-eicosatrienoyl-CoA + NADP(+). The protein operates within lipid metabolism; fatty acid biosynthesis. Its pathway is steroid biosynthesis; estrogen biosynthesis. In terms of biological role, catalyzes the second of the four reactions of the long-chain fatty acids elongation cycle. This endoplasmic reticulum-bound enzymatic process, allows the addition of two carbons to the chain of long- and very long-chain fatty acids/VLCFAs per cycle. This enzyme has a 3-ketoacyl-CoA reductase activity, reducing 3-ketoacyl-CoA to 3-hydroxyacyl-CoA, within each cycle of fatty acid elongation. Thereby, it may participate in the production of VLCFAs of different chain lengths that are involved in multiple biological processes as precursors of membrane lipids and lipid mediators. May also catalyze the transformation of estrone (E1) into estradiol (E2) and play a role in estrogen formation. This Rattus norvegicus (Rat) protein is Very-long-chain 3-oxoacyl-CoA reductase.